We begin with the raw amino-acid sequence, 293 residues long: Nitrogenase iron protein (293 aa).

Residue 10 to 17 (GKGGIGKS) participates in ATP binding. Cysteine 98 contributes to the [4Fe-4S] cluster binding site. An ADP-ribosylarginine; by dinitrogenase reductase ADP-ribosyltransferase modification is found at arginine 101. Cysteine 133 lines the [4Fe-4S] cluster pocket.

The protein belongs to the NifH/BchL/ChlL family. Homodimer. Requires [4Fe-4S] cluster as cofactor. Post-translationally, the reversible ADP-ribosylation of Arg-101 inactivates the nitrogenase reductase and regulates nitrogenase activity.

The catalysed reaction is N2 + 8 reduced [2Fe-2S]-[ferredoxin] + 16 ATP + 16 H2O = H2 + 8 oxidized [2Fe-2S]-[ferredoxin] + 2 NH4(+) + 16 ADP + 16 phosphate + 6 H(+). The key enzymatic reactions in nitrogen fixation are catalyzed by the nitrogenase complex, which has 2 components: the iron protein and the molybdenum-iron protein. The protein is Nitrogenase iron protein of Pectobacterium atrosepticum (strain SCRI 1043 / ATCC BAA-672) (Erwinia carotovora subsp. atroseptica).